Consider the following 361-residue polypeptide: Rho-GTPase-activating protein 5 (361 aa).

Positions 52–245 constitute a Rho-GAP domain; the sequence is IFLTRRDGEK…FLINHQGSFI (194 aa). Positions 306–323 are enriched in low complexity; it reads SSATYSNSPSSNFSNMKS. The tract at residues 306 to 345 is disordered; that stretch reads SSATYSNSPSSNFSNMKSSEVDPGSPPRIKSRSYSLSRSS.

It is found in the membrane. In terms of biological role, GTPase-activating protein for Rho1. Has a role in the negative regulation of (1-3)beta-D-glucan synthase activity and cell integrity. The chain is Rho-GTPase-activating protein 5 (rga5) from Schizosaccharomyces pombe (strain 972 / ATCC 24843) (Fission yeast).